We begin with the raw amino-acid sequence, 72 residues long: DNA gyrase inhibitor YacG (72 aa).

Residues Cys-17, Cys-20, Cys-32, and Cys-36 each coordinate Zn(2+). Residues 52–72 (PGPEEDEMSYPPHSNDGNRSR) form a disordered region.

It belongs to the DNA gyrase inhibitor YacG family. As to quaternary structure, interacts with GyrB. Zn(2+) serves as cofactor.

Its function is as follows. Inhibits all the catalytic activities of DNA gyrase by preventing its interaction with DNA. Acts by binding directly to the C-terminal domain of GyrB, which probably disrupts DNA binding by the gyrase. The sequence is that of DNA gyrase inhibitor YacG from Methylorubrum extorquens (strain CM4 / NCIMB 13688) (Methylobacterium extorquens).